We begin with the raw amino-acid sequence, 448 residues long: Homogentisate 1,2-dioxygenase (448 aa).

The Proton acceptor role is filled by H303. Fe cation contacts are provided by H346 and E352. Positions 361 and 382 each coordinate homogentisate. Residue H382 participates in Fe cation binding.

The protein belongs to the homogentisate dioxygenase family. As to quaternary structure, hexamer; dimer of trimers. Requires Fe cation as cofactor.

It catalyses the reaction homogentisate + O2 = 4-maleylacetoacetate + H(+). Its pathway is amino-acid degradation; L-phenylalanine degradation; acetoacetate and fumarate from L-phenylalanine: step 4/6. Involved in the catabolism of homogentisate (2,5-dihydroxyphenylacetate or 2,5-OH-PhAc), a central intermediate in the degradation of phenylalanine and tyrosine. Catalyzes the oxidative ring cleavage of the aromatic ring of homogentisate to yield maleylacetoacetate. This chain is Homogentisate 1,2-dioxygenase, found in Rhodopseudomonas palustris (strain HaA2).